We begin with the raw amino-acid sequence, 218 residues long: MEPGFWHEKWHQQQIGFHQQDINPFLVKYWQKLGLPADTQVFVPLCGKSLDMCFLAEQGHQVIGCELNELAVQQFFSDIQLEMTQTTVGEHQHYHTEQISLYQGDIFTLPKAITQEVTAFYDRAALIAWPECMRAQYAKQLASLLPSGSVGLLVTLDYPQEALSGPPFAVSPTWVEQHLSDDFDIGVLASQDVLADNPRFIKKAVPWLNEAAYLLKRK.

Positions 10, 45, 66, and 123 each coordinate S-adenosyl-L-methionine.

The protein belongs to the class I-like SAM-binding methyltransferase superfamily. TPMT family.

The protein localises to the cytoplasm. The catalysed reaction is S-adenosyl-L-methionine + a thiopurine = S-adenosyl-L-homocysteine + a thiopurine S-methylether.. This is Thiopurine S-methyltransferase from Shewanella baltica (strain OS195).